The following is a 419-amino-acid chain: Variant surface glycoprotein YnAT 1.1 (419 aa).

Positions 1-28 (MKRVLSNVLKAWIFTIVAFHNFSTSVTA) are cleaved as a signal peptide. N82 and N358 each carry an N-linked (GlcNAc...) asparagine glycan. The segment at 369–405 (ESSRPPSTDANTSQKGPLQRPEKSGESSHLPSGSSHG) is disordered. Residues 372–384 (RPPSTDANTSQKG) are compositionally biased toward polar residues. N379 is a glycosylation site (N-linked (GlcNAc...) (high mannose) asparagine). Over residues 395–405 (SSHLPSGSSHG) the composition is skewed to low complexity. Residue S400 is the site of GPI-anchor amidated serine attachment. Residues 401–419 (GSSHGTKAIRSILHVALLM) constitute a propeptide, removed in mature form.

It localises to the cell membrane. In terms of biological role, VSG forms a coat on the surface of the parasite. The trypanosome evades the immune response of the host by expressing a series of antigenically distinct VSGs from an estimated 1000 VSG genes. This Trypanosoma congolense protein is Variant surface glycoprotein YnAT 1.1.